The following is a 116-amino-acid chain: Ribonuclease P protein component (116 aa).

Belongs to the RnpA family. As to quaternary structure, consists of a catalytic RNA component (M1 or rnpB) and a protein subunit.

The catalysed reaction is Endonucleolytic cleavage of RNA, removing 5'-extranucleotides from tRNA precursor.. Its function is as follows. RNaseP catalyzes the removal of the 5'-leader sequence from pre-tRNA to produce the mature 5'-terminus. It can also cleave other RNA substrates such as 4.5S RNA. The protein component plays an auxiliary but essential role in vivo by binding to the 5'-leader sequence and broadening the substrate specificity of the ribozyme. The chain is Ribonuclease P protein component from Leuconostoc mesenteroides subsp. mesenteroides (strain ATCC 8293 / DSM 20343 / BCRC 11652 / CCM 1803 / JCM 6124 / NCDO 523 / NBRC 100496 / NCIMB 8023 / NCTC 12954 / NRRL B-1118 / 37Y).